Here is a 794-residue protein sequence, read N- to C-terminus: Protein argonaute-4 (794 aa).

A PAZ domain is found at 152–271; the sequence is PIIEFMCEVL…LPLEVCNIVA (120 aa). The Piwi domain occupies 442-753; the sequence is LIVVILPGKT…VAFRARYHLV (312 aa). The segment at 758 to 779 is disordered; that stretch reads DSAEGSHVSGQSNGRDPQALAK.

The protein belongs to the argonaute family. Ago subfamily.

Its subcellular location is the cytoplasm. It localises to the P-body. Its function is as follows. Required for RNA-mediated gene silencing (RNAi). Binds to short RNAs such as microRNAs (miRNAs) and represses the translation of mRNAs which are complementary to them. Lacks endonuclease activity and does not appear to cleave target mRNAs. The chain is Protein argonaute-4 (AGO4) from Gallus gallus (Chicken).